Reading from the N-terminus, the 515-residue chain is Cytochrome P450 76C3 (515 aa).

A helical membrane pass occupies residues 5 to 25 (LIQGMSLPLYFLLTLFFFFFA). Heme is bound at residue Cys-451.

Belongs to the cytochrome P450 family. The cofactor is heme.

It localises to the membrane. The sequence is that of Cytochrome P450 76C3 (CYP76C3) from Arabidopsis thaliana (Mouse-ear cress).